A 320-amino-acid polypeptide reads, in one-letter code: uncharacterized protein (320 aa).

It to S.pombe SpAC23H3.12c.

This is an uncharacterized protein from Saccharomyces cerevisiae (strain ATCC 204508 / S288c) (Baker's yeast).